Here is a 208-residue protein sequence, read N- to C-terminus: Outer-membrane lipoprotein carrier protein (208 aa).

The first 21 residues, Met1–Ala21, serve as a signal peptide directing secretion.

This sequence belongs to the LolA family. In terms of assembly, monomer.

It localises to the periplasm. In terms of biological role, participates in the translocation of lipoproteins from the inner membrane to the outer membrane. Only forms a complex with a lipoprotein if the residue after the N-terminal Cys is not an aspartate (The Asp acts as a targeting signal to indicate that the lipoprotein should stay in the inner membrane). This chain is Outer-membrane lipoprotein carrier protein, found in Methylococcus capsulatus (strain ATCC 33009 / NCIMB 11132 / Bath).